Reading from the N-terminus, the 157-residue chain is MSDDNQTKLEAADIQALLAVLPHRYPFLLIDRIVDIDGDVSATGIKNVTINEPHFTGHFPENPIMPGVLIVEAMAQTAGAISLLQRKTGRPGVVYFMTIDNAKFRRPVVPGDRLLLYVKKIKQRANISKYECVAEVDGVKVAEAEVAAMISVADENL.

The active site involves His-58.

The protein belongs to the thioester dehydratase family. FabZ subfamily.

It localises to the cytoplasm. It carries out the reaction a (3R)-hydroxyacyl-[ACP] = a (2E)-enoyl-[ACP] + H2O. Its function is as follows. Involved in unsaturated fatty acids biosynthesis. Catalyzes the dehydration of short chain beta-hydroxyacyl-ACPs and long chain saturated and unsaturated beta-hydroxyacyl-ACPs. The polypeptide is 3-hydroxyacyl-[acyl-carrier-protein] dehydratase FabZ (Brucella abortus biovar 1 (strain 9-941)).